A 248-amino-acid chain; its full sequence is tRNA (guanine-N(1)-)-methyltransferase (248 aa).

S-adenosyl-L-methionine-binding positions include Gly117 and 137–142; that span reads IGDFVL.

The protein belongs to the RNA methyltransferase TrmD family. Homodimer.

The protein localises to the cytoplasm. It catalyses the reaction guanosine(37) in tRNA + S-adenosyl-L-methionine = N(1)-methylguanosine(37) in tRNA + S-adenosyl-L-homocysteine + H(+). Functionally, specifically methylates guanosine-37 in various tRNAs. The protein is tRNA (guanine-N(1)-)-methyltransferase of Polynucleobacter asymbioticus (strain DSM 18221 / CIP 109841 / QLW-P1DMWA-1) (Polynucleobacter necessarius subsp. asymbioticus).